Here is a 490-residue protein sequence, read N- to C-terminus: Endoglucanase 13 (490 aa).

Residues 1 to 26 (MSQLKNGSSQCLWTSICIVLIVMSMA) form the signal peptide. N6 carries N-linked (GlcNAc...) asparagine glycosylation. The active-site Nucleophile is the D86. Catalysis depends on residues H412, D464, and E473.

It belongs to the glycosyl hydrolase 9 (cellulase E) family.

Its subcellular location is the secreted. It catalyses the reaction Endohydrolysis of (1-&gt;4)-beta-D-glucosidic linkages in cellulose, lichenin and cereal beta-D-glucans.. The chain is Endoglucanase 13 from Arabidopsis thaliana (Mouse-ear cress).